Reading from the N-terminus, the 638-residue chain is DNA repair protein rhp41 (638 aa).

It belongs to the XPC family.

It is found in the nucleus. Functionally, has a role in the nucleotide excision repair (NER) pathway. Acts in both transcription-coupled repair (TCR) which removes damage from the transcribed strand of active genes and in global genome repair (GGR) which removes damage in untranscribed DNA. Involved in the repair of UV-induced damages where it is involved in the removal of cyclobutane pyrimidine dimers (CPDs). The chain is DNA repair protein rhp41 (rhp41) from Schizosaccharomyces pombe (strain 972 / ATCC 24843) (Fission yeast).